An 862-amino-acid chain; its full sequence is FAS1 domain-containing protein YLR001C (862 aa).

An N-terminal signal peptide occupies residues Met1 to Ala23. Residues Leu24–Ala762 lie on the Vacuolar side of the membrane. The 129-residue stretch at Phe34 to Leu162 folds into the FAS1 1 domain. N-linked (GlcNAc...) asparagine glycans are attached at residues Asn68, Asn112, Asn152, Asn200, Asn291, Asn333, Asn450, Asn521, Asn542, Asn569, Asn663, Asn679, and Asn688. 2 consecutive FAS1 domains span residues Pro463–Asp604 and Pro606–Ile744. The chain crosses the membrane as a helical span at residues Val763–Ile783. The Cytoplasmic segment spans residues Thr784–Ser862.

It localises to the vacuole membrane. The chain is FAS1 domain-containing protein YLR001C from Saccharomyces cerevisiae (strain ATCC 204508 / S288c) (Baker's yeast).